A 457-amino-acid polypeptide reads, in one-letter code: Protein trichome birefringence-like 4 (457 aa).

A helical; Signal-anchor for type II membrane protein transmembrane segment spans residues 19–37 (IFLTSLFFLSLFLLSSSSL). The GDS motif signature appears at 173–175 (GDS). A DCXHWCLPGXXDXWN motif motif is present at residues 420–434 (DCSHWCLPGVPDSWN).

It belongs to the PC-esterase family. TBL subfamily.

Its subcellular location is the membrane. May act as a bridging protein that binds pectin and other cell wall polysaccharides. Probably involved in maintaining esterification of pectins. May be involved in the specific O-acetylation of cell wall polymers. The chain is Protein trichome birefringence-like 4 (TBL4) from Arabidopsis thaliana (Mouse-ear cress).